Here is a 404-residue protein sequence, read N- to C-terminus: Tryptophan synthase beta chain (404 aa).

Lys91 is subject to N6-(pyridoxal phosphate)lysine.

Belongs to the TrpB family. In terms of assembly, tetramer of two alpha and two beta chains. It depends on pyridoxal 5'-phosphate as a cofactor.

It carries out the reaction (1S,2R)-1-C-(indol-3-yl)glycerol 3-phosphate + L-serine = D-glyceraldehyde 3-phosphate + L-tryptophan + H2O. It functions in the pathway amino-acid biosynthesis; L-tryptophan biosynthesis; L-tryptophan from chorismate: step 5/5. Functionally, the beta subunit is responsible for the synthesis of L-tryptophan from indole and L-serine. This is Tryptophan synthase beta chain from Clavibacter michiganensis subsp. michiganensis (strain NCPPB 382).